A 293-amino-acid chain; its full sequence is Exosome complex component RRP4 (293 aa).

The region spanning 79–159 (EVGDIVVGRI…SDGAVSLHTR (81 aa)) is the S1 motif domain. Serine 124 is modified (phosphoserine).

The protein belongs to the RRP4 family. As to quaternary structure, component of the RNA exosome core complex (Exo-9), composed of EXOSC1, EXOSC2, EXOSC3, EXOSC4, EXOSC5, EXOSC6, EXOSC7, EXOSC8 and EXOSC9; within the complex interacts with EXOSC4 and EXOSC7. The catalytically inactive RNA exosome core complex (Exo-9) associates with the catalytic subunit EXOSC10/RRP6. Exo-9 may associate with DIS3 to form the nucleolar exosome complex, or DIS3L to form the cytoplasmic exosome complex. Exo-9 is formed by a hexameric base ring consisting of the heterodimers EXOSC4-EXOSC9, EXOSC5-EXOSC8 and EXOSC6-EXOSC7, and a cap ring consisting of EXOSC1, EXOSC2 and EXOSC3. The RNA exosome complex associates with cofactors C1D/RRP47, MPHOSPH6/MPP6 and MTREX/MTR4. Interacts with GTPBP1. Interacts with ZFP36L1 (via N-terminus).

The protein resides in the cytoplasm. It localises to the nucleus. It is found in the nucleolus. Its function is as follows. Non-catalytic component of the RNA exosome complex which has 3'-&gt;5' exoribonuclease activity and participates in a multitude of cellular RNA processing and degradation events. In the nucleus, the RNA exosome complex is involved in proper maturation of stable RNA species such as rRNA, snRNA and snoRNA, in the elimination of RNA processing by-products and non-coding 'pervasive' transcripts, such as antisense RNA species and promoter-upstream transcripts (PROMPTs), and of mRNAs with processing defects, thereby limiting or excluding their export to the cytoplasm. The RNA exosome may be involved in Ig class switch recombination (CSR) and/or Ig variable region somatic hypermutation (SHM) by targeting AICDA deamination activity to transcribed dsDNA substrates. In the cytoplasm, the RNA exosome complex is involved in general mRNA turnover and specifically degrades inherently unstable mRNAs containing AU-rich elements (AREs) within their 3' untranslated regions, and in RNA surveillance pathways, preventing translation of aberrant mRNAs. It seems to be involved in degradation of histone mRNA. The catalytic inactive RNA exosome core complex of 9 subunits (Exo-9) is proposed to play a pivotal role in the binding and presentation of RNA for ribonucleolysis, and to serve as a scaffold for the association with catalytic subunits and accessory proteins or complexes. EXOSC2 as peripheral part of the Exo-9 complex stabilizes the hexameric ring of RNase PH-domain subunits through contacts with EXOSC4 and EXOSC7. The protein is Exosome complex component RRP4 of Homo sapiens (Human).